We begin with the raw amino-acid sequence, 124 residues long: UPF0342 protein DSY2926 (124 aa).

It belongs to the UPF0342 family.

This Desulfitobacterium hafniense (strain Y51) protein is UPF0342 protein DSY2926.